Here is a 138-residue protein sequence, read N- to C-terminus: Small ribosomal subunit protein uS11c (138 aa).

Positions M1 to A22 are disordered. Basic residues predominate over residues G9 to A22.

It belongs to the universal ribosomal protein uS11 family. Part of the 30S ribosomal subunit.

The protein resides in the plastid. It localises to the chloroplast. The chain is Small ribosomal subunit protein uS11c from Populus alba (White poplar).